A 162-amino-acid chain; its full sequence is Interleukin-15 (162 aa).

The first 29 residues, 1-29 (MRILKPYLRSTSIQCYLCLLLNSHFLTEA), serve as a signal peptide directing secretion. Residues 30–48 (CIPVFILSCINAGLPKTEA) constitute a propeptide that is removed on maturation. Disulfide bonds link cysteine 83–cysteine 133 and cysteine 90–cysteine 136. N-linked (GlcNAc...) asparagine glycosylation is found at asparagine 104 and asparagine 127.

Belongs to the IL-15/IL-21 family.

The protein localises to the secreted. Cytokine that plays a major role in the development of inflammatory and protective immune responses to microbial invaders and parasites by modulating immune cells of both the innate and adaptive immune systems. Stimulates the proliferation of natural killer cells, T-cells and B-cells and promotes the secretion of several cytokines. In monocytes, induces the production of IL8 and monocyte chemotactic protein 1/CCL2, two chemokines that attract neutrophils and monocytes respectively to sites of infection. Unlike most cytokines, which are secreted in soluble form, IL15 is expressed in association with its high affinity IL15RA on the surface of IL15-producing cells and delivers signals to target cells that express IL2RB and IL2RG receptor subunits. Binding to its receptor triggers the phosphorylation of JAK1 and JAK3 and the recruitment and subsequent phosphorylation of signal transducer and activator of transcription-3/STAT3 and STAT5. In mast cells, induces the rapid tyrosine phosphorylation of STAT6 and thereby controls mast cell survival and release of cytokines such as IL4. The chain is Interleukin-15 (IL15) from Felis catus (Cat).